Consider the following 508-residue polypeptide: MATKKTSLTKHPLKILFVSSEVEGFAKTGGLADVAKSLPAALKKMGHDVRIVMPFYQTINGKDNAVAILSTELLVESQPFAVSYQVMQLDEGNVPVYALDAPQYYDRPELYAENNQAYADNGERFTFLSAASLDLCEKLGFQPDVIHCNDWHTGLIPFLLKTRYAESDFFAKSKSVITIHNAVFKGVFNYDQYSLIPELIQRRYINAEMDPSHISMLKAGVAYADKVNAVSPNYASELLTHLGSHGMEADFQNRAKDLYGIINGCDYDDWNPETDVYIKQKFKANKVSLARGKKACRRDLQKQVNLPEVDVPVYGMVCRLTEQKGLHYLIPVLEDFLLNDVQVVIVGTGDPTLASALRDISEQHSDKFAFVETYSNPLAHCVEAGVDFFMMPSEFEPCGLNQMYSLAYGTLPIVRSVGGLKDTVIDYDQTPQVATGFIYDTPTPEALLIKLQRSLLLYCQRPQEFKRLQQNAMACKFNWDESAEQYLDMYLGGEQSLVNEICNDKVDA.

Residue lysine 27 participates in ADP-alpha-D-glucose binding.

Belongs to the glycosyltransferase 1 family. Bacterial/plant glycogen synthase subfamily.

It catalyses the reaction [(1-&gt;4)-alpha-D-glucosyl](n) + ADP-alpha-D-glucose = [(1-&gt;4)-alpha-D-glucosyl](n+1) + ADP + H(+). It participates in glycan biosynthesis; glycogen biosynthesis. Synthesizes alpha-1,4-glucan chains using ADP-glucose. This Photobacterium profundum (strain SS9) protein is Glycogen synthase.